The following is a 199-amino-acid chain: Carbon disulfide hydrolase (199 aa).

Residues C36, H91, and C94 each coordinate Zn(2+).

Belongs to the beta-class carbonic anhydrase family. In terms of assembly, exists as both octamers and hexadecamers in solution. The hexadecameric homooligomer may form a catenane, through interactions of two interlocked octameric rings. Requires Zn(2+) as cofactor.

The catalysed reaction is carbon disulfide + 2 H2O = 2 hydrogen sulfide + CO2 + 2 H(+). Its pathway is sulfur metabolism; hydrogen sulfide biosynthesis. In terms of biological role, catalyzes the conversion of carbon disulfide into hydrogen sulfide and carbon dioxide, with carbonyl sulfide as an intermediate. Likely plays a key role in sulfur metabolism that allows A.thiooxidans G8 to grow on carbon disulfide as the main carbon and energy source. Does not show carbonic anhydrase activity (hydration of CO(2) to carbonate). The polypeptide is Carbon disulfide hydrolase (Acidithiobacillus thiooxidans (Thiobacillus thiooxidans)).